A 229-amino-acid chain; its full sequence is 2,3-bisphosphoglycerate-dependent phosphoglycerate mutase 2 (229 aa).

Residues 8–15 (RHGQSEWN), 21–22 (TG), Arg60, 87–90 (ERHY), Lys98, 114–115 (RR), and 183–184 (GN) contribute to the substrate site. His9 (tele-phosphohistidine intermediate) is an active-site residue. Residue Glu87 is the Proton donor/acceptor of the active site.

The protein belongs to the phosphoglycerate mutase family. BPG-dependent PGAM subfamily.

The catalysed reaction is (2R)-2-phosphoglycerate = (2R)-3-phosphoglycerate. Its pathway is carbohydrate degradation; glycolysis; pyruvate from D-glyceraldehyde 3-phosphate: step 3/5. In terms of biological role, catalyzes the interconversion of 2-phosphoglycerate and 3-phosphoglycerate. This chain is 2,3-bisphosphoglycerate-dependent phosphoglycerate mutase 2, found in Latilactobacillus sakei subsp. sakei (strain 23K) (Lactobacillus sakei subsp. sakei).